We begin with the raw amino-acid sequence, 374 residues long: Phosphatidyl-myo-inositol mannosyltransferase (374 aa).

Tyr9 and Gly16 together coordinate GDP-alpha-D-mannose. Residues Gln18, 62–63 (YN), and Arg68 each bind a 1,2-diacyl-sn-glycero-3-phospho-(1D-myo-inositol). Residues Arg196, 201–202 (RK), 251–253 (VDD), Lys256, 274–278 (ESFGI), and Glu282 each bind GDP-alpha-D-mannose.

The protein belongs to the glycosyltransferase group 1 family. Glycosyltransferase 4 subfamily. Monomer. Mg(2+) is required as a cofactor.

It is found in the cell membrane. The catalysed reaction is a 1,2-diacyl-sn-glycero-3-phospho-(1D-myo-inositol) + GDP-alpha-D-mannose = a 1,2-diacyl-sn-glycero-3-phospho-[alpha-D-mannopyranosyl-(1&lt;-&gt;6)-D-myo-inositol] + GDP + H(+). Its pathway is phospholipid metabolism; phosphatidylinositol metabolism. Functionally, involved in the biosynthesis of phosphatidyl-myo-inositol mannosides (PIM) which are early precursors in the biosynthesis of lipomannans (LM) and lipoarabinomannans (LAM). Catalyzes the addition of a mannosyl residue from GDP-D-mannose (GDP-Man) to the position 2 of the carrier lipid phosphatidyl-myo-inositol (PI) to generate a phosphatidyl-myo-inositol bearing an alpha-1,2-linked mannose residue (PIM1). This chain is Phosphatidyl-myo-inositol mannosyltransferase, found in Mycobacterium leprae (strain TN).